The primary structure comprises 525 residues: Transmembrane protein 184C (525 aa).

7 helical membrane-spanning segments follow: residues 17 to 37 (LLVL…IWKF), 48 to 68 (SWFI…WGIL), 83 to 103 (IIRI…ALVY), 121 to 141 (VIYN…PNLI), 212 to 232 (YLVI…LLFY), 254 to 274 (VVFV…LGVI), and 287 to 307 (AVAT…AAIA). Disordered regions lie at residues 358 to 394 (PKKK…PSPG) and 483 to 525 (LFPS…STDP). Positions 373 to 388 (SSLLSSSSQDLTSGSS) are enriched in low complexity. The span at 483-502 (LFPSTETSENSMIDTSESQQ) shows a compositional bias: polar residues. The segment covering 503–525 (ESSDLCTESSDSSTESSDLSTDP) has biased composition (low complexity).

Belongs to the TMEM184 family.

The protein localises to the membrane. Possible tumor suppressor which may play a role in cell growth. The polypeptide is Transmembrane protein 184C (Tmem184c) (Mus musculus (Mouse)).